Consider the following 393-residue polypeptide: Elongation factor Tu (393 aa).

Residues 10–203 enclose the tr-type G domain; it reads KPHVNIGTIG…AVDSYIPEPV (194 aa). The G1 stretch occupies residues 19–26; it reads GHVDHGKT. Residue 19–26 coordinates GTP; it reads GHVDHGKT. T26 provides a ligand contact to Mg(2+). Positions 60-64 are G2; that stretch reads GITIS. The interval 81–84 is G3; sequence DCPG. Residues 81-85 and 136-139 contribute to the GTP site; these read DCPGH and NKVD. Positions 136–139 are G4; sequence NKVD. Positions 173–175 are G5; that stretch reads SAL.

The protein belongs to the TRAFAC class translation factor GTPase superfamily. Classic translation factor GTPase family. EF-Tu/EF-1A subfamily. As to quaternary structure, monomer.

It is found in the cytoplasm. The catalysed reaction is GTP + H2O = GDP + phosphate + H(+). Functionally, GTP hydrolase that promotes the GTP-dependent binding of aminoacyl-tRNA to the A-site of ribosomes during protein biosynthesis. This Prosthecochloris aestuarii (strain DSM 271 / SK 413) protein is Elongation factor Tu.